Consider the following 388-residue polypeptide: Carbohydrate sulfotransferase 4 (388 aa).

At methionine 1–glycine 7 the chain is on the cytoplasmic side. Residues arginine 8–valine 28 form a helical; Signal-anchor for type II membrane protein membrane-spanning segment. Topologically, residues histidine 29–glycine 388 are lumenal. Residues tryptophan 50–phenylalanine 56 and arginine 204–serine 212 each bind 3'-phosphoadenylyl sulfate. N-linked (GlcNAc...) asparagine glycosylation is found at asparagine 307, asparagine 328, and asparagine 369.

It belongs to the sulfotransferase 1 family. Gal/GlcNAc/GalNAc subfamily. As to quaternary structure, monomer. As to expression, specifically expressed in high endothelial venules (HEV) of peripheral lymph nodes.

It localises to the golgi apparatus membrane. The enzyme catalyses 3-O-{N-acetyl-beta-D-glucosaminyl-(1-&gt;3)-beta-D-galactosyl-(1-&gt;3)-N-acetyl-alpha-D-galactosaminyl}-L-threonyl-[protein] + 3'-phosphoadenylyl sulfate = 3-O-{6-O-sulfo-N-acetyl-beta-D-glucosaminyl-(1-&gt;3)-beta-D-galactosyl-(1-&gt;3)-N-acetyl-alpha-D-galactosaminyl}-L-threonyl-[protein] + adenosine 3',5'-bisphosphate + H(+). The catalysed reaction is 3-O-{N-acetyl-beta-D-glucosaminyl-(1-&gt;3)-beta-D-galactosyl-(1-&gt;3)-N-acetyl-alpha-D-galactosaminyl}-L-seryl-[protein] + 3'-phosphoadenylyl sulfate = 3-O-{6-O-sulfo-N-acetyl-beta-D-glucosaminyl-(1-&gt;3)-beta-D-galactosyl-(1-&gt;3)-N-acetyl-alpha-D-galactosaminyl}-L-seryl-[protein] + adenosine 3',5'-bisphosphate + H(+). It carries out the reaction a 3-O-{beta-D-galactosyl-(1-&gt;3)-[N-acetyl-beta-D-glucosaminyl-(1-&gt;6)]-N-acetyl-alpha-D-galactosaminyl}-L-threonyl-[protein] + 3'-phosphoadenylyl sulfate = 3-O-{beta-D-galactosyl-(1-&gt;3)-[6-O-sulfo-N-acetyl-beta-D-glucosaminyl-(1-&gt;6)]-N-acetyl-alpha-D-galactosaminyl}-L-threonyl-[protein] + adenosine 3',5'-bisphosphate + H(+). It catalyses the reaction 3-O-{beta-D-galactosyl-(1-&gt;3)-[N-acetyl-beta-D-glucosaminyl-(1-&gt;6)]-N-acetyl-alpha-D-galactosaminyl}-L-seryl-[protein] + 3'-phosphoadenylyl sulfate = 3-O-{beta-D-galactosyl-(1-&gt;3)-[6-O-sulfo-N-acetyl-beta-D-glucosaminyl-(1-&gt;6)]-N-acetyl-alpha-D-galactosaminyl}-L-seryl-[protein] + adenosine 3',5'-bisphosphate + H(+). It participates in protein modification; carbohydrate sulfation. In terms of biological role, sulfotransferase involved in SELL/L-selectin ligand biosynthesis pathway. Catalyzes the transfer of the sulfate group from 3'-phospho-5'-adenylyl sulfate (PAPS) onto the hydroxyl group at C-6 position of the non-reducing N-acetylglucosamine (GlcNAc) residue within O-linked mucin-type glycans. Contributes to generate sialyl 6-sulfo Lewis X determinant (also known as MECA-79 epitope) for SELL recognition, a prerequisite for continuous lymphocyte homing into peripheral lymph nodes and antigen immune surveillance. Transfers the sulfate group primarily on core 2 GlcNAcbeta1-6(Galbeta1-3)GalNAcalphaSer/Thr and extended core 1 GlcNAcbeta1-3Galbeta1-3GalNAcalphaSer/Thr based O-linked glycans on CD34 and GLYCAM1 peripheral node addressins (PNAds) expressed on the lumenal side of high endothelial venules (HEVs). The recognition of PNAds by SELL initiates a multistep process comprising tethering and rolling of blood lymphocytes on HEVs against the blood flow, followed by chemokine signaling, integrin-mediated lymphocyte adhesion onto endothelial cells and lymphocyte transendothelial migration. Modulates rolling velocity and differential T and B lymphocyte recruitment into peripheral lymph nodes, with a major role in B lymphocyte homing. Might be redundant in sulfation of MADCAM1 and lymphocyte trafficking to mesenteric lymph nodes. Can also sulfonate core 3 GlcNAcbeta1-3GalNAc-R based glycans as well as GlcNAcbeta1-3Galbeta1-Glc, GlcNAcbeta1-6ManOMe and GlcNAcbeta1-2Man oligosaccharides, which might be ectopically expressed during tumorigenesis. The polypeptide is Carbohydrate sulfotransferase 4 (Chst4) (Mus musculus (Mouse)).